We begin with the raw amino-acid sequence, 154 residues long: Endoribonuclease YbeY (154 aa).

The Zn(2+) site is built by histidine 113, histidine 117, and histidine 123.

The protein belongs to the endoribonuclease YbeY family. Requires Zn(2+) as cofactor.

It is found in the cytoplasm. Single strand-specific metallo-endoribonuclease involved in late-stage 70S ribosome quality control and in maturation of the 3' terminus of the 16S rRNA. This Anaplasma marginale (strain Florida) protein is Endoribonuclease YbeY.